We begin with the raw amino-acid sequence, 275 residues long: Monooxygenase af470 (275 aa).

It carries out the reaction prefumagillin + NADPH + 2 O2 = fumagillin + acetaldehyde + NADP(+) + H2O. Its pathway is secondary metabolite biosynthesis; terpenoid biosynthesis. Its function is as follows. Monooxygenase; part of the gene cluster that mediates the biosynthesis of fumagillin, a meroterpenoid that has numerous biological activities including irreversible inhibition of human type 2 methionine aminopeptidase (METAP2). Within the pathway, the monooxygenase af470 catalyzes the oxidative cleavage of prefumagillin to yield the final compound of the pathway, fumagillin. The pathway begins with the conversion of farnesyl pyrophosphate (FPP) to beta-trans-bergamotene by the membrane-bound beta-trans-bergamotene synthase af520. The multifunctional cytochrome P450 monooxygenase af510 then converts beta-trans-bergamotene into 5-keto-demethoxyfumagillol via several oxydation steps. 5-keto-demethoxyfumagillol is then subjected to successive C-6 hydroxylation and O-methylation by the dioxygenase af480 and O-methyltransferase af390-400, respectively, to yield 5-keto-fumagillol, which is then stereoselectively reduced by the keto-reductase af490 to 5R-hydroxy-seco-sesquiterpene. The next step is the polyketide transferase af380-catalyzed transfer of a dodecapentaenoyl group synthesized by the polyketide synthase af370 onto 5R-hydroxy-seco-sesquiterpene which leads to the production of prefumagillin. Finally, oxidative cleavage by the monooxygenase af470 converts prefumagillin to fumagillin. This chain is Monooxygenase af470, found in Aspergillus fumigatus (strain ATCC MYA-4609 / CBS 101355 / FGSC A1100 / Af293) (Neosartorya fumigata).